Here is a 387-residue protein sequence, read N- to C-terminus: MGAGGRMTVPNKWEGEGDEKSQKPVQRVPSAKPPFTLSEIKKAIPPHCFKRSLLKSFSYVLYDLTLVAIFYYVATTYIDALPGPLRYAAWPVYWALQGCVLTGVWVIAHECGHHAFSDYQWVDDCVGLVLHSALLVPYFSWKYSHRRHHSNTGSLERDEVFVPKPKSKMPWFSKYLNNPPGRVMTLIVTLTLGWPLYLALNVSGWPYDRFACHFDPYGPIYTDRERLQIYISDVGIMAATYTLYKIAAARGLAWLVCVYGVPLLIVNAFLVTITYLQHTHPALPHYDSSEWDWLRGALATADRDYGILNKVFHNITDTHVAHHLFSTMPHYHAMEATKAIKPILGDYYQFDGTPVYKAMWREARECLYVEPDDGANSKGVFWYKKNL.

The segment at 1-31 is disordered; the sequence is MGAGGRMTVPNKWEGEGDEKSQKPVQRVPSA. Over residues 13-22 the composition is skewed to basic and acidic residues; the sequence is WEGEGDEKSQ. 2 helical membrane passes run 58–78 and 88–108; these read SYVLYDLTLVAIFYYVATTYI and AAWPVYWALQGCVLTGVWVIA. The short motif at 109-113 is the Histidine box-1 element; it reads HECGH. The helical transmembrane segment at 121–141 threads the bilayer; sequence WVDDCVGLVLHSALLVPYFSW. A Histidine box-2 motif is present at residues 145 to 149; the sequence is HRRHH. The next 3 membrane-spanning stretches (helical) occupy residues 183 to 203, 229 to 249, and 251 to 271; these read VMTLIVTLTLGWPLYLALNVS, IYISDVGIMAATYTLYKIAAA, and GLAWLVCVYGVPLLIVNAFLV. The Histidine box-3 motif lies at 319–323; sequence HVAHH.

The protein belongs to the fatty acid desaturase type 1 family.

Its subcellular location is the membrane. It participates in lipid metabolism; polyunsaturated fatty acid biosynthesis. Functionally, delta(12)-fatty acid desaturase producing in a heterologous system linoleic acid (18:2(9Z,12Z)) and to a lower extent hexadecadienoic acid (16:2(9Z,12Z)). The chain is Delta(12)-acyl-lipid-desaturase from Punica granatum (Pomegranate).